Consider the following 363-residue polypeptide: MAPAGGPRVKKVILERLDSGEVVVGDGGFLFTLEKRGFVKAGLWTPEAVVEYPSAVRQLHTEFLRAGADVLQTFTFSAAEDRMESKWEAVNAAACDLAQEVADGGAALVAGGICQTSLYKYHKDETRIKNIFRLQLGVFARKNVDFLIAEYFEHVEEAVWAVEVLREVGAPVAVTMCIGPEGDMHGVTPGECAVRLSRAGANIIGVNCRFGPWTSLQTMKLMKEGLRDAGLQAHLMVQCLGFHTPDCGKGGFVDLPEYPFGLEPRVATRWDIQKYAREAYNLGVRYIGGCCGFEPYHIRAIAEELAPERGFLPPASEKHGIWGSGLDMHTKPWIRARARREYWETLLPASGRPFCPSLSKPDA.

Residues 11 to 305 (KVILERLDSG…YHIRAIAEEL (295 aa)) form the Hcy-binding domain. 3 residues coordinate Zn(2+): Cys208, Cys290, and Cys291.

In terms of assembly, homotetramer. Requires Zn(2+) as cofactor.

The enzyme catalyses S-methyl-L-methionine + L-homocysteine = 2 L-methionine + H(+). It functions in the pathway amino-acid biosynthesis; L-methionine biosynthesis via de novo pathway; L-methionine from L-homocysteine (BhmT route): step 1/1. Functionally, involved in the regulation of homocysteine metabolism. Converts betaine and homocysteine to dimethylglycine and methionine, respectively. This reaction is also required for the irreversible oxidation of choline. This is S-methylmethionine--homocysteine S-methyltransferase BHMT2 (Bhmt2) from Rattus norvegicus (Rat).